A 184-amino-acid polypeptide reads, in one-letter code: ATP-dependent protease subunit HslV (184 aa).

T12 is an active-site residue. The Na(+) site is built by A167, C170, and T173.

The protein belongs to the peptidase T1B family. HslV subfamily. As to quaternary structure, a double ring-shaped homohexamer of HslV is capped on each side by a ring-shaped HslU homohexamer. The assembly of the HslU/HslV complex is dependent on binding of ATP.

It is found in the cytoplasm. The catalysed reaction is ATP-dependent cleavage of peptide bonds with broad specificity.. Its activity is regulated as follows. Allosterically activated by HslU binding. In terms of biological role, protease subunit of a proteasome-like degradation complex believed to be a general protein degrading machinery. This is ATP-dependent protease subunit HslV from Wolbachia pipientis subsp. Culex pipiens (strain wPip).